Consider the following 506-residue polypeptide: Aluminum-activated malate transporter 7 (506 aa).

Transmembrane regions (helical) follow at residues 28–48 (VGLV…YDSF), 52–72 (AMWA…ATLG), 78–98 (VAAT…ASMS), 104–124 (PILL…VRFF), 130–150 (RYDY…VSGF), and 166–186 (VIIG…VWAG). The segment at 461 to 485 (DDGNNDDTSKNDNGSKEVSIHEKHE) is disordered. A compositionally biased stretch (basic and acidic residues) spans 467-485 (DTSKNDNGSKEVSIHEKHE).

This sequence belongs to the aromatic acid exporter (TC 2.A.85) family.

The protein resides in the membrane. Functionally, malate transporter. This chain is Aluminum-activated malate transporter 7 (ALMT7), found in Arabidopsis thaliana (Mouse-ear cress).